The sequence spans 311 residues: Probable inactive peptidyl-prolyl cis-trans isomerase-like 6 (311 aa).

One can recognise a PPIase cyclophilin-type domain in the interval Phe145–Asp308.

This sequence belongs to the cyclophilin-type PPIase family.

Functionally, probable inactive PPIase with no peptidyl-prolyl cis-trans isomerase activity. This is Probable inactive peptidyl-prolyl cis-trans isomerase-like 6 from Homo sapiens (Human).